An 89-amino-acid chain; its full sequence is Sec-independent protein translocase protein TatA (89 aa).

A helical membrane pass occupies residues 1-21; the sequence is MFGLSPAQLIILLVVILLIFG.

The protein belongs to the TatA/E family. As to quaternary structure, the Tat system comprises two distinct complexes: a TatABC complex, containing multiple copies of TatA, TatB and TatC subunits, and a separate TatA complex, containing only TatA subunits. Substrates initially bind to the TatABC complex, which probably triggers association of the separate TatA complex to form the active translocon.

Its subcellular location is the cell inner membrane. Its function is as follows. Part of the twin-arginine translocation (Tat) system that transports large folded proteins containing a characteristic twin-arginine motif in their signal peptide across membranes. TatA could form the protein-conducting channel of the Tat system. The polypeptide is Sec-independent protein translocase protein TatA (Haemophilus influenzae (strain ATCC 51907 / DSM 11121 / KW20 / Rd)).